Here is an 83-residue protein sequence, read N- to C-terminus: Evasin P1090 (83 aa).

A signal peptide spans 1 to 24 (MEVKIFAFLQIAVLIAFSLHLASA). Intrachain disulfides connect cysteine 44–cysteine 63, cysteine 48–cysteine 65, and cysteine 59–cysteine 76. N-linked (GlcNAc...) asparagine glycosylation is present at asparagine 47. The N-linked (GlcNAc...) asparagine glycan is linked to asparagine 70.

Its subcellular location is the secreted. Its function is as follows. Salivary chemokine-binding protein which binds to host chemokines CXCL1, CXCL2, CXCL3, CXCL5, CXCL6, CXCL10, CXCL11 and CXCL13. The polypeptide is Evasin P1090 (Ixodes ricinus (Common tick)).